We begin with the raw amino-acid sequence, 581 residues long: Alpha-amylase 2 (581 aa).

The N-terminal stretch at Met-1 to Ala-24 is a signal peptide. A disulfide bridge connects residues Cys-56 and Cys-64. Trp-109 is a binding site for substrate. Asn-147 provides a ligand contact to Ca(2+). Cys-176 and Cys-191 are disulfide-bonded. Asp-202 contributes to the Ca(2+) binding site. Substrate is bound at residue Arg-231. Residues Asp-233, His-237, and Glu-257 each contribute to the Ca(2+) site. Catalysis depends on Asp-233, which acts as the Nucleophile. Lys-236 to His-237 provides a ligand contact to substrate. The active-site Proton donor is Glu-257. Gly-261 contacts substrate. Cys-267 and Cys-311 are disulfide-bonded. Asn-291 carries an N-linked (GlcNAc...) asparagine glycan. A substrate-binding site is contributed by Asp-325. Asn-332 carries N-linked (GlcNAc...) asparagine glycosylation. Arg-372 contributes to the substrate binding site. Ser-551 carries GPI-anchor amidated serine lipidation. Positions Glu-552–Ile-581 are cleaved as a propeptide — removed in mature form.

Belongs to the glycosyl hydrolase 13 family. Requires Ca(2+) as cofactor.

The protein localises to the cell membrane. It carries out the reaction Endohydrolysis of (1-&gt;4)-alpha-D-glucosidic linkages in polysaccharides containing three or more (1-&gt;4)-alpha-linked D-glucose units.. This chain is Alpha-amylase 2 (aah2), found in Schizosaccharomyces pombe (strain 972 / ATCC 24843) (Fission yeast).